The following is a 60-amino-acid chain: Ixodegrin-like peptide (60 aa).

The N-terminal stretch at 1–21 is a signal peptide; sequence MNAAFIAALLILGALTLDAMA. The Cell attachment site signature appears at 49 to 51; it reads RGD.

This sequence belongs to the ixodegrin family. In terms of processing, contains 3 disulfide bonds. As to expression, expressed in salivary glands.

It localises to the secreted. In terms of biological role, tick salivary platelet aggregation inhibitor that plays an important part in the anti-hemostatic strategy of ticks. Inhibits platelet aggregation induced by ADP, thrombin and thromboxane A2 (TXA2). Blocks platelet adhesion to soluble collagen (most probably through the binding to alpha-2/beta-1 integrin (ITGA2/ITGB1)) and binds to purified glycoprotein IIb/IIIa (ITGA2B/ITGB3) in a dose-dependent manner. In vivo, reduces thrombus weight effectively in a rat arteriovenous shunt model and inhibits thrombosis in a carrageenan-induced mouse tail thrombosis model. In Ixodes scapularis (Black-legged tick), this protein is Ixodegrin-like peptide.